The chain runs to 514 residues: Deoxynucleoside triphosphate triphosphohydrolase SAMHD1 homolog (514 aa).

The interval 1–24 is disordered; that stretch reads MNNTFKYVNEDVSGTEGEESDYDP. A GTP-binding site is contributed by Lys-80. Asn-83 is an a 2'-deoxyribonucleoside 5'-triphosphate binding site. GTP is bound at residue 101–109; sequence DTEQFQRLR. Residues Gln-113 and Arg-128 each coordinate substrate. One can recognise an HD domain in the interval 128–259; the sequence is RFEHSIGVSH…SVDVDKFDYL (132 aa). Zn(2+) is bound by residues His-131, His-170, and Asp-171. His-174 contributes to the substrate binding site. The active site involves His-196. Substrate-binding positions include 252–258, Tyr-258, and Asp-262; that span reads DVDKFDY. Asp-254 lines the Zn(2+) pocket. A 2'-deoxyribonucleoside 5'-triphosphate is bound by residues Arg-276, 291 to 293, and Asn-297; that span reads LSK. Substrate-binding positions include Arg-305 and 309–314; that span reads HKLVYT. The a 2'-deoxyribonucleoside 5'-triphosphate site is built by His-315 and Lys-316. Arg-380 and Lys-384 together coordinate GTP.

This sequence belongs to the SAMHD1 family. As to quaternary structure, homodimer; in absence of GTP and dNTP. Homotetramer; in GTP- and dNTP-bound form. Zn(2+) is required as a cofactor.

The catalysed reaction is a 2'-deoxyribonucleoside 5'-triphosphate + H2O = a 2'-deoxyribonucleoside + triphosphate + H(+). Allosterically activated and regulated via the combined actions of GTP and dNTPs (dATP, dGTP, dTTP and dCTP): Allosteric site 1 binds GTP, while allosteric site 2 binds dNTP. Allosteric activation promotes the formation of highly active homotetramers. Functionally, has deoxynucleoside triphosphate (dNTPase) activity. The sequence is that of Deoxynucleoside triphosphate triphosphohydrolase SAMHD1 homolog from Dictyostelium discoideum (Social amoeba).